The sequence spans 534 residues: MYRRDFLKSVTAAWVAFGLPNPLGGAFATNRVIPLRRLGQSQRFDYEWLKERARALAATPYHSRKRVLPTPLERLSWDQYQSIRYRQDHALWADSDAHFQVKFFHLGLYFHSPVRMYEVVDGMAQELAYDPAAFDYGSSGLNGKGLPKDLGFAGFRLNTRKDIDRDFAAFLGASYFRAVGQEGQYGQSARGLAVNTGSSGPEEFPDFIAYYLEQPTADADTVVMYGLLDSPSIAGAYRFSITHADVLRMDIDSALYPRETIERLGIAPCTSMYQVGENDRRMGWDWRPEIHDTDGLFLWTGNGEWIWRPLCNPLHLRFNMFLDNNPRGFGLLQRDRDFDHYQDDGVFYEKRPCLWVEPKHGWGEGSVQLVEIPTFDETFDNIVAFWNPRNKPHPGQELLFGYRLYWGAFPPVSSSLAYCVATRTGLGGVVGQKRKYFSWRFAVDFVGGKLAALARVHDVSVEPVLHMTRGRPEIVSARPLHEIRGYRVMFDVVPLEDSAQQIDIRLYLRDTNGEPLTETWLYQWVPPILEERKY.

The tat-type signal signal peptide spans 1-28 (MYRRDFLKSVTAAWVAFGLPNPLGGAFA).

It belongs to the OpgD/OpgG family. Post-translationally, predicted to be exported by the Tat system. The position of the signal peptide cleavage has not been experimentally proven.

Its subcellular location is the periplasm. Its pathway is glycan metabolism; osmoregulated periplasmic glucan (OPG) biosynthesis. In terms of biological role, probably involved in the control of the structural glucose backbone of osmoregulated periplasmic glucans (OPGs). This chain is Glucans biosynthesis protein D, found in Xylella fastidiosa (strain M23).